The primary structure comprises 616 residues: Bifunctional 2-aminoethylphosphonate cytidylyltransferase/aminotransferase (616 aa).

The tract at residues 1 to 240 (MIKQAVILAG…VKNIYPHIVE (240 aa)) is 2-aminoethylphosphonate cytidylyltransferase. CMP-(2-aminoethyl)phosphonate is bound by residues L8, G10, G11, K25, T83, T88, E104, and S105. Residues D106 and D136 each contribute to the Mg(2+) site. The CMP-(2-aminoethyl)phosphonate site is built by D136, K153, and E196. Mg(2+) contacts are provided by E220 and D222. Residues 250-616 (EVLLNPGPAT…EYMNGIGVGV (367 aa)) are 2-aminoethylphosphonate aminotransferase. Pyridoxal 5'-phosphate contacts are provided by S313, G314, T315, T390, K441, and T490.

It in the N-terminal section; belongs to the LicC/PntC cytidylyltransferase family. The protein in the C-terminal section; belongs to the class-V pyridoxal-phosphate-dependent aminotransferase family. PhnW subfamily. Homodimer. Mg(2+) is required as a cofactor. It depends on Zn(2+) as a cofactor. The cofactor is pyridoxal 5'-phosphate.

It catalyses the reaction (2-aminoethyl)phosphonate + CTP = CMP-(2-aminoethyl)phosphonate + diphosphate. The catalysed reaction is (2-aminoethyl)phosphonate + pyruvate = phosphonoacetaldehyde + L-alanine. It participates in phosphorus metabolism; phosphonate biosynthesis. Cytidylyltransferase activity is inhibited in the presence of EDTA and is restored by the addition of Mg(2+) or Zn(2+). In terms of biological role, bifunctional transferase involved in the biosynthesis of cell-surface phosphonates. The aminotransferase region catalyzes the transformation of phosphonoacetaldehyde (PnAA) to 2-aminoethylphosphonate (AEP). The cytidylyltransferase region catalyzes the activation of 2-aminoethylphosphonate (AEP) to CMP-2-aminoethylphosphonate (CMP-AEP). Cannot use phosphocholine. Exhibits strong activity towards CTP, limited activity towards ATP and no activity with GTP. In Treponema denticola (strain ATCC 35405 / DSM 14222 / CIP 103919 / JCM 8153 / KCTC 15104), this protein is Bifunctional 2-aminoethylphosphonate cytidylyltransferase/aminotransferase.